Here is a 342-residue protein sequence, read N- to C-terminus: Anthranilate phosphoribosyltransferase (342 aa).

5-phospho-alpha-D-ribose 1-diphosphate is bound by residues Gly74, 77–78 (GD), Thr82, 84–87 (NVST), 101–109 (KHGNRSVSG), and Ser113. Gly74 serves as a coordination point for anthranilate. Residue Ser86 participates in Mg(2+) binding. An anthranilate-binding site is contributed by Asn104. An anthranilate-binding site is contributed by Arg159. Positions 218 and 219 each coordinate Mg(2+).

This sequence belongs to the anthranilate phosphoribosyltransferase family. Homodimer. It depends on Mg(2+) as a cofactor.

The catalysed reaction is N-(5-phospho-beta-D-ribosyl)anthranilate + diphosphate = 5-phospho-alpha-D-ribose 1-diphosphate + anthranilate. It participates in amino-acid biosynthesis; L-tryptophan biosynthesis; L-tryptophan from chorismate: step 2/5. Catalyzes the transfer of the phosphoribosyl group of 5-phosphorylribose-1-pyrophosphate (PRPP) to anthranilate to yield N-(5'-phosphoribosyl)-anthranilate (PRA). The chain is Anthranilate phosphoribosyltransferase from Sulfolobus acidocaldarius (strain ATCC 33909 / DSM 639 / JCM 8929 / NBRC 15157 / NCIMB 11770).